The chain runs to 540 residues: Chaperonin GroEL (540 aa).

Residues 29–32, 86–90, G413, 476–478, and D492 each bind ATP; these read TIGP, DGTTT, and NAA.

Belongs to the chaperonin (HSP60) family. As to quaternary structure, forms a cylinder of 14 subunits composed of two heptameric rings stacked back-to-back. Interacts with the co-chaperonin GroES.

Its subcellular location is the cytoplasm. The enzyme catalyses ATP + H2O + a folded polypeptide = ADP + phosphate + an unfolded polypeptide.. Together with its co-chaperonin GroES, plays an essential role in assisting protein folding. The GroEL-GroES system forms a nano-cage that allows encapsulation of the non-native substrate proteins and provides a physical environment optimized to promote and accelerate protein folding. This is Chaperonin GroEL from Staphylococcus saprophyticus subsp. saprophyticus (strain ATCC 15305 / DSM 20229 / NCIMB 8711 / NCTC 7292 / S-41).